We begin with the raw amino-acid sequence, 288 residues long: Undecaprenyl-diphosphatase (288 aa).

Transmembrane regions (helical) follow at residues 25–45, 53–73, 93–113, 121–141, 171–191, 196–216, 231–251, and 263–283; these read GITE…NEFL, FIDM…MVIY, WKLW…GLLL, LSNF…FIWI, VLSI…GIIV, SVAA…YSGL, GQAA…LFVI, and FTVF…YGAV.

Belongs to the UppP family.

It localises to the cell membrane. It carries out the reaction di-trans,octa-cis-undecaprenyl diphosphate + H2O = di-trans,octa-cis-undecaprenyl phosphate + phosphate + H(+). Catalyzes the dephosphorylation of undecaprenyl diphosphate (UPP). Confers resistance to bacitracin. This Streptococcus thermophilus (strain ATCC BAA-250 / LMG 18311) protein is Undecaprenyl-diphosphatase.